We begin with the raw amino-acid sequence, 348 residues long: Lipooligosaccharide heptosyltransferase 2 (348 aa).

The protein belongs to the glycosyltransferase 9 family.

It carries out the reaction an L-alpha-D-Hep-(1-&gt;5)-[alpha-Kdo-(2-&gt;4)]-alpha-Kdo-(2-&gt;6)-lipid A + ADP-L-glycero-beta-D-manno-heptose = an L-alpha-D-Hep-(1-&gt;3)-L-alpha-D-Hep-(1-&gt;5)-[alpha-Kdo-(2-&gt;4)]-alpha-Kdo-(2-&gt;6)-lipid A + ADP + H(+). Its pathway is bacterial outer membrane biogenesis; LOS core biosynthesis. In terms of biological role, glycosyltransferase involved in the biosynthesis of the core oligosaccharide region of lipooligosaccharide (LOS). Catalyzes the addition of a heptose unit to the heptosyl-Kdo2-lipid A module. The chain is Lipooligosaccharide heptosyltransferase 2 from Haemophilus ducreyi (strain 35000HP / ATCC 700724).